Consider the following 367-residue polypeptide: Histidinol-phosphate aminotransferase (367 aa).

The residue at position 226 (lysine 226) is an N6-(pyridoxal phosphate)lysine.

The protein belongs to the class-II pyridoxal-phosphate-dependent aminotransferase family. Histidinol-phosphate aminotransferase subfamily. In terms of assembly, homodimer. Pyridoxal 5'-phosphate serves as cofactor.

It carries out the reaction L-histidinol phosphate + 2-oxoglutarate = 3-(imidazol-4-yl)-2-oxopropyl phosphate + L-glutamate. The protein operates within amino-acid biosynthesis; L-histidine biosynthesis; L-histidine from 5-phospho-alpha-D-ribose 1-diphosphate: step 7/9. The protein is Histidinol-phosphate aminotransferase of Wolinella succinogenes (strain ATCC 29543 / DSM 1740 / CCUG 13145 / JCM 31913 / LMG 7466 / NCTC 11488 / FDC 602W) (Vibrio succinogenes).